The primary structure comprises 568 residues: Calcium-dependent protein kinase 5 (568 aa).

The region spanning glutamate 125–phenylalanine 379 is the Protein kinase domain. ATP contacts are provided by residues leucine 131–valine 139 and lysine 154. Residue aspartate 245 is the Proton acceptor of the active site. The J domain autoinhibitory motif signature appears at lysine 400–cysteine 408. Positions lysine 400–glutamate 435 are j domain. The J domain EF-hand interaction motif motif lies at lysine 409–isoleucine 418. 4 consecutive EF-hand domains span residues lysine 425–glutamate 460, aspartate 462–phenylalanine 495, glutamine 496–glutamine 531, and phenylalanine 534–glutamate 568. 16 residues coordinate Ca(2+): aspartate 438, asparagine 440, aspartate 442, glutamate 449, aspartate 473, aspartate 475, asparagine 477, glutamate 484, aspartate 509, aspartate 511, aspartate 513, glutamate 520, aspartate 547, asparagine 549, aspartate 551, and glutamate 558.

It belongs to the protein kinase superfamily. Ser/Thr protein kinase family. CDPK subfamily. The cofactor is Mg(2+). In terms of processing, may be palmitoylated. Post-translationally, autophosphorylated in vitro.

It is found in the cytoplasm. The protein resides in the cytoplasmic vesicle. Its subcellular location is the secretory vesicle. It localises to the microneme membrane. The protein localises to the cell membrane. The enzyme catalyses L-seryl-[protein] + ATP = O-phospho-L-seryl-[protein] + ADP + H(+). It catalyses the reaction L-threonyl-[protein] + ATP = O-phospho-L-threonyl-[protein] + ADP + H(+). With respect to regulation, activated by calcium. Upon calcium binding to the EF-hand domains, the C-terminus of the junction domain (J domain) undergoes a conformational change which results in the dissociation of the pseudo-substrate inhibitory motif from the catalytic domain. This, in turn, may facilitate the autophosphorylation of the activation loop at Thr-285, which leads to the kinase activation. Calcium-dependent protein kinase which acts as a sensor and effector of intracellular Ca(2+) levels probably in part downstream of cGMP-activated PKG kinase. Plays a central role in host erythrocytes and hepatocytes infection cycles. During the liver stage, involved in sporozoite motility and thus in sporozoite invasion of host hepatocytes, probably together with CDPK1 and CDPK4. Involved in merosome egress from host hepatocytes, probably together with CDPK4. Required for the release of hepatic merozoites from merosomes in the host blood stream. During the asexual blood stage, required for merozoite egress from host erythrocytes by triggering microneme secretion. Phosphorylates transporter NPT1 at late schizont stage. The sequence is that of Calcium-dependent protein kinase 5 from Plasmodium falciparum (isolate 3D7).